Here is an 840-residue protein sequence, read N- to C-terminus: Aconitase AMT8 (840 aa).

Position 258–260 (258–260) interacts with substrate; the sequence is DSH. The [4Fe-4S] cluster site is built by C450, C513, and C516. Residues R536, R541, and 709–710 each bind substrate; that span reads SR.

It belongs to the aconitase/IPM isomerase family.

Its pathway is mycotoxin biosynthesis. Its function is as follows. Aconitase; part of the gene clusters that mediate the biosynthesis of AM-toxins, host-selective toxins (HSTs) causing Alternaria blotch on apple, a worldwide distributed disease. AM-toxins are cyclic depsipeptides containing the 3 residues 2-hydroxy-isovaleric acid (2-HIV), dehydroalanine, L-alanine which are common for all 3 AM-toxins I to III. The fourth precursor is L-alpha-amino-methoxyphenyl-valeric acid (L-Amv) for AM-toxin I, L-alpha-amino-phenyl-valeric acid (L-Apv) for AM-toxin II, and L-alpha-amino-hydroxyphenyl-valeric acid (L-Ahv) for AM-toxin III. AM-toxins have two target sites for affecting susceptible apple cells; they cause invagination of the plasma membrane and electrolyte loss and chloroplast disorganization. The non-ribosomal peptide synthetase AMT1 contains 4 catalytic modules and is responsible for activation of each residue in AM-toxin. The aldo-keto reductase AMT2 catalyzes the conversion of 2-keto-isovaleric acid (2-KIV) to 2-hydroxy-isovaleric acid (2-HIV), one of the precursor residues incorporated by AMT1 during AM-toxin biosynthesis, by reduction of its ketone to an alcohol. The cytochrome P450 monooxygenase AMT3 and the thioesterase AMT4 are also important for AM-toxin production, but their exact function within the AM-toxin biosynthesis are not known yet. Up to 21 proteins (including AMT1 to AMT4) are predicted to be involved in AM-toxin biosynthesis since their expression ishighly up-regulated in AM-toxin-producing cultures. The chain is Aconitase AMT8 from Alternaria alternata (Alternaria rot fungus).